Consider the following 356-residue polypeptide: S-adenosylmethionine:tRNA ribosyltransferase-isomerase (356 aa).

It belongs to the QueA family. As to quaternary structure, monomer.

It is found in the cytoplasm. The catalysed reaction is 7-aminomethyl-7-carbaguanosine(34) in tRNA + S-adenosyl-L-methionine = epoxyqueuosine(34) in tRNA + adenine + L-methionine + 2 H(+). It participates in tRNA modification; tRNA-queuosine biosynthesis. Its function is as follows. Transfers and isomerizes the ribose moiety from AdoMet to the 7-aminomethyl group of 7-deazaguanine (preQ1-tRNA) to give epoxyqueuosine (oQ-tRNA). This is S-adenosylmethionine:tRNA ribosyltransferase-isomerase from Serratia proteamaculans (strain 568).